The sequence spans 498 residues: Bifunctional protein GlmU (498 aa).

The interval 1-238 is pyrophosphorylase; it reads MSDAAVVILA…PALVAGVNDR (238 aa). Residues 9–12, Lys23, Gln80, and 85–86 each bind UDP-N-acetyl-alpha-D-glucosamine; these read LAAG and GT. Position 111 (Asp111) interacts with Mg(2+). Residues Gly148, Glu163, Asn178, and Asn236 each coordinate UDP-N-acetyl-alpha-D-glucosamine. Residue Asn236 participates in Mg(2+) binding. The tract at residues 239-259 is linker; it reads VQLADLGAELNRRVVAAHQRA. The segment at 260-498 is N-acetyltransferase; that stretch reads GVTIVDPATT…TAKPAPATGE (239 aa). Positions 341 and 359 each coordinate UDP-N-acetyl-alpha-D-glucosamine. His371 functions as the Proton acceptor in the catalytic mechanism. 2 residues coordinate UDP-N-acetyl-alpha-D-glucosamine: Tyr374 and Asn385. Acetyl-CoA is bound by residues Ala388, 394–395, Ser413, and Ala431; that span reads NY. The interval 470-498 is disordered; it reads AAEAAAADGDTAAADRAAATAKPAPATGE.

In the N-terminal section; belongs to the N-acetylglucosamine-1-phosphate uridyltransferase family. The protein in the C-terminal section; belongs to the transferase hexapeptide repeat family. In terms of assembly, homotrimer. The cofactor is Mg(2+).

The protein localises to the cytoplasm. It catalyses the reaction alpha-D-glucosamine 1-phosphate + acetyl-CoA = N-acetyl-alpha-D-glucosamine 1-phosphate + CoA + H(+). The enzyme catalyses N-acetyl-alpha-D-glucosamine 1-phosphate + UTP + H(+) = UDP-N-acetyl-alpha-D-glucosamine + diphosphate. It participates in nucleotide-sugar biosynthesis; UDP-N-acetyl-alpha-D-glucosamine biosynthesis; N-acetyl-alpha-D-glucosamine 1-phosphate from alpha-D-glucosamine 6-phosphate (route II): step 2/2. The protein operates within nucleotide-sugar biosynthesis; UDP-N-acetyl-alpha-D-glucosamine biosynthesis; UDP-N-acetyl-alpha-D-glucosamine from N-acetyl-alpha-D-glucosamine 1-phosphate: step 1/1. Its pathway is bacterial outer membrane biogenesis; LPS lipid A biosynthesis. Catalyzes the last two sequential reactions in the de novo biosynthetic pathway for UDP-N-acetylglucosamine (UDP-GlcNAc). The C-terminal domain catalyzes the transfer of acetyl group from acetyl coenzyme A to glucosamine-1-phosphate (GlcN-1-P) to produce N-acetylglucosamine-1-phosphate (GlcNAc-1-P), which is converted into UDP-GlcNAc by the transfer of uridine 5-monophosphate (from uridine 5-triphosphate), a reaction catalyzed by the N-terminal domain. This Mycolicibacterium gilvum (strain PYR-GCK) (Mycobacterium gilvum (strain PYR-GCK)) protein is Bifunctional protein GlmU.